The following is a 41-amino-acid chain: Omega-theraphotoxin-Hg1a (41 aa).

3 cysteine pairs are disulfide-bonded: Cys-7-Cys-21, Cys-14-Cys-26, and Cys-20-Cys-33.

This sequence belongs to the neurotoxin 10 (Hwtx-1) family. 56 (SNX-482) subfamily. Expressed by the venom gland.

The protein localises to the secreted. In terms of biological role, toxin that blocks vertebrate P/Q-type (Cav2.1/CACNA1A) and R-type (Cav2.3/CACNA1E) voltage-gated calcium channels. Also inhibits sodium channels (Nav) in bovine chromaffin cells by delaying sodium channel inactivation. In Hysterocrates gigas (Cameroon red baboon tarantula), this protein is Omega-theraphotoxin-Hg1a.